The following is a 282-amino-acid chain: Mitochondrial outer membrane protein porin (282 aa).

This sequence belongs to the eukaryotic mitochondrial porin family.

It localises to the mitochondrion outer membrane. Forms a channel through the cell membrane that allows diffusion of small hydrophilic molecules. The channel adopts an open conformation at low or zero membrane potential and a closed conformation at potentials above 30-40 mV. The open state has a weak anion selectivity whereas the closed state is cation-selective. In Candida albicans (strain SC5314 / ATCC MYA-2876) (Yeast), this protein is Mitochondrial outer membrane protein porin (POR1).